We begin with the raw amino-acid sequence, 32 residues long: NTATCSMHRLADFLGRSSNNFGAILSPTNVGS.

The protein belongs to the calcitonin family. As to quaternary structure, can form homodimers. Interacts with IDE and INS. Interaction with INS inhibits homodimerization and fibril formation.

The protein resides in the secreted. In terms of biological role, amylin/IAPP is a glucoregulatory peptide hormone that plays an important role in the regulation of energy homeostasis. Selectively inhibits insulin-stimulated glucose utilization and glycogen deposition in muscle, while not affecting adipocyte glucose metabolism. IAPP function is mediated by the CALCR-RAMPs (AMYRs) receptor complexes. Amylin can also bind CALCR receptor in the absence of RAMPs, although it is more selective for AMYRs. The sequence is that of Islet amyloid polypeptide (IAPP) from Saguinus oedipus (Cotton-top tamarin).